Here is a 127-residue protein sequence, read N- to C-terminus: Nuclear transport factor 2 (127 aa).

K4 carries the N6-acetyllysine modification. In terms of domain architecture, NTF2 spans 10-121 (IGSSFIQHYY…WVCTNDMFRL (112 aa)).

As to quaternary structure, homodimer. Interacts with RAN (GDP-bound form); the interaction is direct and regulates RAN nuclear import. Interacts with the nucleoporins NUP54, NUP58 and NUP62 (via FG repeats); recruits NUTF2 to the nuclear pore complex a step required for NUTF2-mediated GDP-bound RAN nuclear import. Interacts with CAPG; mediates its nuclear import.

It is found in the cytoplasm. The protein resides in the cytosol. The protein localises to the nucleus outer membrane. Its subcellular location is the nucleus. It localises to the nuclear pore complex. It is found in the nucleus inner membrane. The protein resides in the nucleoplasm. Mediates the import of GDP-bound RAN from the cytoplasm into the nucleus which is essential for the function of RAN in cargo receptor-mediated nucleocytoplasmic transport. Thereby, plays indirectly a more general role in cargo receptor-mediated nucleocytoplasmic transport. Interacts with GDP-bound RAN in the cytosol, recruits it to the nuclear pore complex via its interaction with nucleoporins and promotes its nuclear import. The chain is Nuclear transport factor 2 from Bos taurus (Bovine).